The primary structure comprises 28 residues: Potassium channel toxin alpha-KTx 9.10 (28 aa).

3 disulfides stabilise this stretch: C3-C19, C6-C24, and C10-C26.

Belongs to the short scorpion toxin superfamily. Potassium channel inhibitor family. Alpha-KTx 09 subfamily. In terms of tissue distribution, expressed by the venom gland.

Its subcellular location is the secreted. In terms of biological role, blocks Shaker potassium channels. This chain is Potassium channel toxin alpha-KTx 9.10, found in Mesobuthus eupeus (Lesser Asian scorpion).